Here is a 401-residue protein sequence, read N- to C-terminus: Bifunctional sugar-1-phosphate nucleotidylyltransferase/acetyltransferase (401 aa).

A nucleotidylyltransferase region spans residues Met1–Lys220. A ribonucleoside 5'-triphosphate is bound by residues Ala8–Arg13, Gln73, and Gly79. Residues Thr80, Tyr97, Gly131, Glu146, and Asn157 each coordinate N-acetyl-alpha-D-glucosamine 1-phosphate. The acetyltransferase stretch occupies residues Glu236–Val401.

The protein in the N-terminal section; belongs to the N-acetylglucosamine-1-phosphate uridyltransferase family. In the C-terminal section; belongs to the transferase hexapeptide repeat family. In terms of assembly, homotrimer. It depends on Co(2+) as a cofactor. The cofactor is Mn(2+).

It carries out the reaction dTTP + alpha-D-glucose 1-phosphate + H(+) = dTDP-alpha-D-glucose + diphosphate. The enzyme catalyses alpha-D-glucose 1-phosphate + UTP + H(+) = UDP-alpha-D-glucose + diphosphate. The catalysed reaction is N-acetyl-alpha-D-galactosamine 1-phosphate + UTP + H(+) = UDP-N-acetyl-alpha-D-galactosamine + diphosphate. It catalyses the reaction N-acetyl-alpha-D-glucosamine 1-phosphate + UTP + H(+) = UDP-N-acetyl-alpha-D-glucosamine + diphosphate. It carries out the reaction alpha-D-galactosamine 1-phosphate + acetyl-CoA = N-acetyl-alpha-D-galactosamine 1-phosphate + CoA + H(+). The enzyme catalyses alpha-D-glucosamine 1-phosphate + acetyl-CoA = N-acetyl-alpha-D-glucosamine 1-phosphate + CoA + H(+). It functions in the pathway nucleotide-sugar biosynthesis; UDP-N-acetyl-alpha-D-glucosamine biosynthesis; N-acetyl-alpha-D-glucosamine 1-phosphate from alpha-D-glucosamine 6-phosphate (route II): step 2/2. It participates in nucleotide-sugar biosynthesis; UDP-N-acetyl-alpha-D-glucosamine biosynthesis; UDP-N-acetyl-alpha-D-glucosamine from N-acetyl-alpha-D-glucosamine 1-phosphate: step 1/1. GlcN-1-P acetyltransferase activity is inhibited by divalent cations. GalN-1-P acetyltransferase activity is enhanced by Co(2+), Mg(2+) and Ca(2+), but inhibited by Zn(2+) or Mn(2+). In terms of biological role, bifunctional enzyme involved in the synthesis of UDP-N-acetylglucosamine (UDP-GlcNAc) and UDP-N-acetylgalactosamine (UDP-GalNAc). It has multiple amino-sugar-1-phosphate acetyltransferase activities, including glucosamine-1-phosphate (GlcN-1-P) acetyltransferase and galactosamine-1-phosphate (GalN-1-P) acetyltransferase activities, and multiple sugar-1-phosphate nucleotidylyltransferase activities, including N-acetylglucosamine-1-phosphate (GlcNAc-1-P) uridyltransferase and N-acetylgalactosamine-1-phosphate (GalNAc-1-P) uridyltransferase activities. Also catalyzes the formation of dTDP-glucose from dTTP and glucose-1-phosphate (Glc-1-P), and the reverse reaction, which produces dTTP from dTDP-glucose and diphosphate. Can also catalyze the formation of UDP-glucose from UTP and glucose-1-phosphate. In Sulfurisphaera tokodaii (strain DSM 16993 / JCM 10545 / NBRC 100140 / 7) (Sulfolobus tokodaii), this protein is Bifunctional sugar-1-phosphate nucleotidylyltransferase/acetyltransferase.